Consider the following 501-residue polypeptide: MEFSVKSGNPEKQRSACIVVGVFEPRRLSGVAEQLDKVSDGYLSNLLRRGDLEGKSGQVLLLHHVPNILAERVLLVGCGKERELDERQYRQIIARTMNTLNETGSMEAVCFLSELHVKGRDTYWKVRQAVESARATLYNFNELKSKKEEPRRPLRKLVFNVPSRKELALGEQAVQHALAVATGMDICRNVANMPPNICTPRYLADQAKLMADNYDNLTVATVEEAEMEKLGMNAYLAVGRGSEHESVLTLMHYKGAADDQAPIVLVGKGLTFDSGGISIKPSANMDEMKYDMGGAAGVLGAMQALAELQLPINVIGTVAGCENMPDGKAYRPGDILTTMSGQTVEVLNTDAEGRLVLCDTLTYIERFEPESVIDLATLTGACVIALGSHASAVLSQHNPLAHEILNAAQQSGDKAWRMPLWDEYQSMLDSPFADMANIGGREAGTITAACFLSRYTKKYNWAHMDIAGTAWQGGKDKGSTGRPVPLLTQFLINRCNTEAAE.

Mn(2+) contacts are provided by lysine 268 and aspartate 273. Lysine 280 is an active-site residue. Mn(2+)-binding residues include aspartate 291, aspartate 350, and glutamate 352. Arginine 354 is a catalytic residue.

This sequence belongs to the peptidase M17 family. The cofactor is Mn(2+).

It localises to the cytoplasm. The enzyme catalyses Release of an N-terminal amino acid, Xaa-|-Yaa-, in which Xaa is preferably Leu, but may be other amino acids including Pro although not Arg or Lys, and Yaa may be Pro. Amino acid amides and methyl esters are also readily hydrolyzed, but rates on arylamides are exceedingly low.. It catalyses the reaction Release of an N-terminal amino acid, preferentially leucine, but not glutamic or aspartic acids.. Its function is as follows. Presumably involved in the processing and regular turnover of intracellular proteins. Catalyzes the removal of unsubstituted N-terminal amino acids from various peptides. The sequence is that of Probable cytosol aminopeptidase from Idiomarina loihiensis (strain ATCC BAA-735 / DSM 15497 / L2-TR).